The chain runs to 250 residues: MAISKKKRFFFDLAQDEDDAETVQEVKKVEQQLKLEPVVQPQHDLTNQTKANQSSQDRKFFSKDMPQFDFGPLLKFGDEFVKSFNQFPKQEPQTSTQPVNVQPQSEPTNFNNQVPTQPVHQTAEVHLNEFQQPTTTNFNQQPVATSNIQVEATQPIVEPVPQPEPQPAVEQPQVKQTTRPSNKLQEEENLPPPKAKVPGIIPLERQERLTTGVHFYTSTRVWNKVKRYAKAVNIPISRILTMILDQVIEE.

Disordered stretches follow at residues 85–107 (NQFP…QSEP) and 158–198 (EPVP…AKVP). Low complexity predominate over residues 167 to 176 (PAVEQPQVKQ).

This is an uncharacterized protein from Mycoplasma pneumoniae (strain ATCC 29342 / M129 / Subtype 1) (Mycoplasmoides pneumoniae).